The primary structure comprises 309 residues: N(5)-(carboxyethyl)ornithine synthase (309 aa).

Positions 15, 71, and 92 each coordinate pyruvate. Residue 171–176 (GSGNVA) participates in NADP(+) binding.

It belongs to the AlaDH/PNT family. CEOS subfamily. Homotetramer.

The catalysed reaction is N(5)-[1(S)-1-carboxyethyl]-L-ornithine + NADP(+) + H2O = L-ornithine + pyruvate + NADPH + H(+). In terms of biological role, catalyzes the NADPH-dependent reductive condensation between pyruvic acid and the side chain amino group of L-ornithine to form N(5)-(L-1-carboxyethyl)-L-ornithine. To a lesser extent, can also use L-lysine as substrate (yielding N(6)-(L-1-carboxyethyl)-L-lysine). The chain is N(5)-(carboxyethyl)ornithine synthase (ceo) from Lactococcus lactis subsp. lactis (strain IL1403) (Streptococcus lactis).